Reading from the N-terminus, the 382-residue chain is Mannitol-1-phosphate 5-dehydrogenase (382 aa).

3-14 (ALHFGAGNIGRG) serves as a coordination point for NAD(+).

Belongs to the mannitol dehydrogenase family.

It catalyses the reaction D-mannitol 1-phosphate + NAD(+) = beta-D-fructose 6-phosphate + NADH + H(+). The sequence is that of Mannitol-1-phosphate 5-dehydrogenase from Salmonella newport (strain SL254).